Here is a 167-residue protein sequence, read N- to C-terminus: Small ribosomal subunit protein uS5 (167 aa).

The region spanning 11-74 (LQEKLIAVNR…EKARRAMINV (64 aa)) is the S5 DRBM domain.

It belongs to the universal ribosomal protein uS5 family. In terms of assembly, part of the 30S ribosomal subunit. Contacts proteins S4 and S8.

Functionally, with S4 and S12 plays an important role in translational accuracy. In terms of biological role, located at the back of the 30S subunit body where it stabilizes the conformation of the head with respect to the body. The polypeptide is Small ribosomal subunit protein uS5 (Serratia proteamaculans (strain 568)).